A 346-amino-acid polypeptide reads, in one-letter code: Oxidoreductase calI (346 aa).

The segment at 11–33 (VSTPQGRGDGRPTADQVLRDQDP) is disordered. Basic and acidic residues predominate over residues 18–32 (GDGRPTADQVLRDQD). The NADP(+) site is built by Leu52, Lys76, Asp100, and Asn128. Catalysis depends on Ser181, which acts as the Proton donor. Tyr208, Lys212, and Ile241 together coordinate NADP(+). The active-site Proton acceptor is Tyr208. Lys212 acts as the Lowers pKa of active site Tyr in catalysis.

It belongs to the short-chain dehydrogenases/reductases (SDR) family.

Its pathway is secondary metabolite biosynthesis. Functionally, oxidoreductase; part of the gene cluster that mediates the biosynthesis of calbistrin A and related compounds. Calbistrin A is a secondary metabolite with an interesting structure that was recently found to have bioactivity against leukemia cells. It consists of two polyketides linked by an ester bond: a bicyclic decalin containing polyketide and a linear 12 carbon dioic acid structure. The polyketide synthase calA is probably responsible for forming the decalin moiety. Because calA lacks a designated enoylreductase (ER) domain, the required activity is provided by the trans-enoyl reductase calK. Following release from the PKS, calF then probably catalyzes the oxidation and the subsequent Diels Alder cycloisomerization that lead to the formation of the decalin moiety. The decalin polyketide backbone includes two C-methyl groups, at C7 and C11 in backbone, of which the C7 position is probably methylated by the methyltransferase domain of calA. A candidate for adding the methyl group at C11, if not done by CalA, is the cluster methyltransferase calH. Several additional tailoring enzymes within the cluster could be involved in the modification of the decalin polyketide product. Those include the 3 cytochrome P450 monooxygenases CalE, CalG and CalL, of which one might be responsible for the introduction of the extra hydroxyl group attached to the backbone of the decalin moiety, at position C9 in the backbone, that allows for attachment of the linear moiety. One tailoring enzyme activity that is expected to be involved in biosynthesis of calbistrin is an acyltransferase for connecting the two polyketide synthase products, and which could be performed by the cluster acyltransferase calJ. The enzyme responsible for the biosynthesis of the linear moiety, probably a second PKS, has not been identified yet. This Penicillium decumbens protein is Oxidoreductase calI.